The following is a 212-amino-acid chain: Probable GTP-binding protein EngB (212 aa).

Residues 38–210 (SLPEIAFVGK…KASLAKCIKP (173 aa)) form the EngB-type G domain. Residues 46-53 (GKSNVGKS), 73-77 (GRTRQ), 91-94 (DLPG), 158-161 (TKSD), and 189-191 (VSN) each bind GTP. Residues Ser-53 and Thr-75 each contribute to the Mg(2+) site.

The protein belongs to the TRAFAC class TrmE-Era-EngA-EngB-Septin-like GTPase superfamily. EngB GTPase family. The cofactor is Mg(2+).

Functionally, necessary for normal cell division and for the maintenance of normal septation. The protein is Probable GTP-binding protein EngB of Rickettsia conorii (strain ATCC VR-613 / Malish 7).